The following is a 264-amino-acid chain: 3-methyl-2-oxobutanoate hydroxymethyltransferase (264 aa).

Mg(2+)-binding residues include Asp45 and Asp84. 3-methyl-2-oxobutanoate contacts are provided by residues 45 to 46, Asp84, and Lys112; that span reads DS. Glu114 is a Mg(2+) binding site. Glu181 serves as the catalytic Proton acceptor.

This sequence belongs to the PanB family. Homodecamer; pentamer of dimers. Mg(2+) is required as a cofactor.

It localises to the cytoplasm. The catalysed reaction is 3-methyl-2-oxobutanoate + (6R)-5,10-methylene-5,6,7,8-tetrahydrofolate + H2O = 2-dehydropantoate + (6S)-5,6,7,8-tetrahydrofolate. It participates in cofactor biosynthesis; (R)-pantothenate biosynthesis; (R)-pantoate from 3-methyl-2-oxobutanoate: step 1/2. In terms of biological role, catalyzes the reversible reaction in which hydroxymethyl group from 5,10-methylenetetrahydrofolate is transferred onto alpha-ketoisovalerate to form ketopantoate. The protein is 3-methyl-2-oxobutanoate hydroxymethyltransferase of Vibrio campbellii (strain ATCC BAA-1116).